Reading from the N-terminus, the 294-residue chain is Phosphatidylglycerol--prolipoprotein diacylglyceryl transferase (294 aa).

Transmembrane regions (helical) follow at residues 19 to 39 (VFGF…GIVL), 69 to 89 (LLTW…VFFY), 101 to 121 (ILAV…VIAA), 139 to 159 (IMAL…FINA), 195 to 215 (QLYE…WLVW), 224 to 244 (GYVA…VEFF), and 267 to 287 (WGLT…IWLI). A 1,2-diacyl-sn-glycero-3-phospho-(1'-sn-glycerol) is bound at residue Arg152.

It belongs to the Lgt family.

The protein localises to the cell inner membrane. The enzyme catalyses L-cysteinyl-[prolipoprotein] + a 1,2-diacyl-sn-glycero-3-phospho-(1'-sn-glycerol) = an S-1,2-diacyl-sn-glyceryl-L-cysteinyl-[prolipoprotein] + sn-glycerol 1-phosphate + H(+). Its pathway is protein modification; lipoprotein biosynthesis (diacylglyceryl transfer). In terms of biological role, catalyzes the transfer of the diacylglyceryl group from phosphatidylglycerol to the sulfhydryl group of the N-terminal cysteine of a prolipoprotein, the first step in the formation of mature lipoproteins. This is Phosphatidylglycerol--prolipoprotein diacylglyceryl transferase from Roseobacter denitrificans (strain ATCC 33942 / OCh 114) (Erythrobacter sp. (strain OCh 114)).